Here is a 428-residue protein sequence, read N- to C-terminus: Cell division protein FtsZ (428 aa).

Residues 73 to 77 (GGGGN), 160 to 162 (GTG), Glu-191, Arg-195, and Asp-239 contribute to the GTP site. Residues 378–428 (NAANARVVSAPPKRTPTQTPLTNSPAPTPEPKEKSGLDIPDFLQRRRPPKN) are disordered. Residues 392–402 (TPTQTPLTNSP) are compositionally biased toward polar residues.

It belongs to the FtsZ family. Homodimer. Polymerizes to form a dynamic ring structure in a strictly GTP-dependent manner. Interacts directly with several other division proteins.

The protein resides in the cytoplasm. Its function is as follows. Essential cell division protein that forms a contractile ring structure (Z ring) at the future cell division site. The regulation of the ring assembly controls the timing and the location of cell division. One of the functions of the FtsZ ring is to recruit other cell division proteins to the septum to produce a new cell wall between the dividing cells. Binds GTP and shows GTPase activity. The sequence is that of Cell division protein FtsZ from Nostoc sp. (strain PCC 7120 / SAG 25.82 / UTEX 2576).